Here is a 575-residue protein sequence, read N- to C-terminus: Lysine--tRNA ligase (575 aa).

Mg(2+) is bound by residues E412 and E419.

This sequence belongs to the class-II aminoacyl-tRNA synthetase family. Homodimer. Mg(2+) is required as a cofactor.

The protein resides in the cytoplasm. It carries out the reaction tRNA(Lys) + L-lysine + ATP = L-lysyl-tRNA(Lys) + AMP + diphosphate. This is Lysine--tRNA ligase from Bacteroides fragilis (strain YCH46).